The chain runs to 465 residues: ATP-dependent protease ATPase subunit HslU (465 aa).

Residues Val-20, 62–67 (GVGKTE), Asp-277, Glu-343, and Arg-415 contribute to the ATP site.

It belongs to the ClpX chaperone family. HslU subfamily. A double ring-shaped homohexamer of HslV is capped on each side by a ring-shaped HslU homohexamer. The assembly of the HslU/HslV complex is dependent on binding of ATP.

It localises to the cytoplasm. In terms of biological role, ATPase subunit of a proteasome-like degradation complex; this subunit has chaperone activity. The binding of ATP and its subsequent hydrolysis by HslU are essential for unfolding of protein substrates subsequently hydrolyzed by HslV. HslU recognizes the N-terminal part of its protein substrates and unfolds these before they are guided to HslV for hydrolysis. This Geobacillus kaustophilus (strain HTA426) protein is ATP-dependent protease ATPase subunit HslU.